The sequence spans 66 residues: M-poneratoxin-Dq3a (66 aa).

The first 23 residues, 1-23, serve as a signal peptide directing secretion; the sequence is MKLSALSIIFGMILVMTIMYTKA. Residues 24 to 43 constitute a propeptide that is removed on maturation; sequence EAEAEAEADADADAKAEAEA.

This sequence belongs to the non-disulfide-bridged peptide (NDBP) superfamily. Medium-length antimicrobial peptide (group 3) family. Ponericin-W subfamily. Expressed by the venom gland.

It localises to the secreted. It is found in the target cell membrane. In terms of biological role, may have antimicrobial properties by disrupting the integrity of the bacterial cell membrane. In addition, when tested in vitro on the parasite Trypanosoma cruzi (responsible of the Chagas disease), is able to potently reduce the number of the three forms (epimastigote, trypomastigote and amastigote) by inducing cell death through necrosis. Functionally, may have antimicrobial properties by disrupting the integrity of the bacterial cell membrane. In addition, when tested in vitro on the parasite Trypanosoma cruzi (responsible of the Chagas disease), is able to moderately reduce the number of the forms epimastigote and trypomastigote. Its activity on the amastigote form has not been tested. Its function is as follows. May have antimicrobial properties by disrupting the integrity of the bacterial cell membrane. In addition, when tested in vitro on the parasite Trypanosoma cruzi (responsible of the Chagas disease), shows only a weak reduction of the number of the trypomastigote forms. Has no activity on the epimastigote forms. Its activity on the amastigote form has not been tested. The sequence is that of M-poneratoxin-Dq3a from Dinoponera quadriceps (South American ant).